The chain runs to 152 residues: Nucleoside diphosphate kinase (152 aa).

Residues Lys-10, Phe-58, Arg-86, Thr-92, Arg-103, and Asn-113 each contribute to the ATP site. His-116 (pros-phosphohistidine intermediate) is an active-site residue.

Belongs to the NDK family. Mg(2+) serves as cofactor.

The protein localises to the cytoplasm. The catalysed reaction is a 2'-deoxyribonucleoside 5'-diphosphate + ATP = a 2'-deoxyribonucleoside 5'-triphosphate + ADP. It catalyses the reaction a ribonucleoside 5'-diphosphate + ATP = a ribonucleoside 5'-triphosphate + ADP. In terms of biological role, major role in the synthesis of nucleoside triphosphates other than ATP. The ATP gamma phosphate is transferred to the NDP beta phosphate via a ping-pong mechanism, using a phosphorylated active-site intermediate. The protein is Nucleoside diphosphate kinase of Methanosphaera stadtmanae (strain ATCC 43021 / DSM 3091 / JCM 11832 / MCB-3).